We begin with the raw amino-acid sequence, 540 residues long: Cytochrome P450 monooxygenase CYP3 (540 aa).

Residue N2 is glycosylated (N-linked (GlcNAc...) asparagine). The helical transmembrane segment at 26–46 threads the bilayer; the sequence is IFGLSSSTLVVLVAMIAVSTL. Residues N100, N210, and N400 are each glycosylated (N-linked (GlcNAc...) asparagine). C471 is a binding site for heme.

It belongs to the cytochrome P450 family. It depends on heme as a cofactor.

The protein localises to the membrane. It functions in the pathway secondary metabolite biosynthesis. Its function is as follows. Cytochrome P450 monooxygenase; part of the gene cluster that mediates the biosynthesis of itaconic acid and 2-hydroxyparaconate. Cis-aconitate is secreted by the mitochondrial tricarboxylate transporter MTT1. In the cytosol cis-aconitate is converted into trans-aconitate via isomerization by the aconitate-delta-isomerase ADI1. Decarboxylation of trans-aconitate by the trans-aconitate decarboxylase TAD1 then leads then to the production of itaconic acid. The cytochrome P450 monooxygenase CYP3 further converts itaconate to 2-hydroxyparaconate via oxidation of the double bond, leading to a transient epoxide, which can subsequently be lactonized to produce 2-hydroxyparaconate. Secretion of itaconate and possibly 2-hydroxyparaconate into the medium is mediated by the major facilitator ITP1. The glyoxalase domain-containing protein RDO1 is not involved in the biosynthesis of itaconate and 2-hydroxyparaconate, however, it might play a role in the further conversion of 2-hydroxyparaconate to itatartarate. This chain is Cytochrome P450 monooxygenase CYP3, found in Mycosarcoma maydis (Corn smut fungus).